The sequence spans 202 residues: MVNYPHNLIRQKVSSVQKQTKQNKVDFANRGMSFEAAINATNDYYLSRQIAVIHKKPTPVQIVKVDYPKRSRAKIVEAYFRQASTTDYCGVYKGHYVDFEAKETRQKTAMPMKNFHLHQIEHMTCVLHQKGICFVLLHFSTLKETYYLPAQALISFYQIDNGSKSMPIDYIRKNGFKVAFGAFPQVPYLNIIEQNFLGGDYN.

Mg(2+) contacts are provided by Thr-85, Asp-87, Glu-100, and Gln-119.

This sequence belongs to the RecU family. Mg(2+) serves as cofactor.

Its subcellular location is the cytoplasm. The catalysed reaction is Endonucleolytic cleavage at a junction such as a reciprocal single-stranded crossover between two homologous DNA duplexes (Holliday junction).. Endonuclease that resolves Holliday junction intermediates in genetic recombination. Cleaves mobile four-strand junctions by introducing symmetrical nicks in paired strands. Promotes annealing of linear ssDNA with homologous dsDNA. Required for DNA repair, homologous recombination and chromosome segregation. The chain is Holliday junction resolvase RecU from Streptococcus pyogenes serotype M5 (strain Manfredo).